The primary structure comprises 104 residues: Translation initiation factor 1A (104 aa).

Low complexity predominate over residues 1-14 (MRGQQAPPQQPTRV). Positions 1 to 20 (MRGQQAPPQQPTRVRTPREN) are disordered. The S1-like domain maps to 12–87 (TRVRTPRENE…EKCDVIWRYT (76 aa)).

This sequence belongs to the eIF-1A family.

Functionally, seems to be required for maximal rate of protein biosynthesis. Enhances ribosome dissociation into subunits and stabilizes the binding of the initiator Met-tRNA(I) to 40 S ribosomal subunits. The chain is Translation initiation factor 1A (eIF1A) from Methanococcus maripaludis (strain C6 / ATCC BAA-1332).